The sequence spans 246 residues: uncharacterized protein (246 aa).

Positions 120–149 (EKCAGETSPYTSASVSNSKKATSSSNFTKS) are disordered. A compositionally biased stretch (low complexity) spans 130–149 (TSASVSNSKKATSSSNFTKS).

This is an uncharacterized protein from Caenorhabditis elegans.